Consider the following 232-residue polypeptide: Protein Mis18-alpha (232 aa).

Residues S36, S39, and S40 each carry the phosphoserine modification. A Mis18 domain is found at 79–177 (PLVFLCSGCR…SVEAIESYVL (99 aa)). 4 residues coordinate Zn(2+): C84, C87, C140, and C143. A Glycyl lysine isopeptide (Lys-Gly) (interchain with G-Cter in SUMO2) cross-link involves residue K161. Residue S232 is modified to Phosphoserine.

Belongs to the mis18 family. As to quaternary structure, homodimer, and heterodimer with OIP5/MIS18B. Identified in a complex containing MIS18A, OIP5/MIS18B, MIS18BP1, RBBP7 and RBBP4.

The protein resides in the nucleus. It localises to the chromosome. The protein localises to the centromere. Functionally, required for recruitment of CENPA to centromeres and normal chromosome segregation during mitosis. This chain is Protein Mis18-alpha (MIS18A), found in Pan troglodytes (Chimpanzee).